The primary structure comprises 69 residues: Protein SlyX homolog (69 aa).

It belongs to the SlyX family.

The chain is Protein SlyX homolog from Pseudomonas aeruginosa (strain LESB58).